The chain runs to 476 residues: Homeobox protein invected (476 aa).

Disordered regions lie at residues 1-43, 273-331, and 347-381; these read MAAV…SEDI, KTRY…TSGD, and DRPS…AFSG. Residues 23 to 32 are compositionally biased toward polar residues; it reads SPNTRDTTSP. Composition is skewed to basic and acidic residues over residues 33-43 and 292-305; these read ECHDDEKSEDI and KLDE…KTPD. Residues 318–331 show a composition bias toward low complexity; sequence GSNSGSTSGATSGD. Residues 372–431 constitute a DNA-binding region (homeobox); it reads EKRPRTAFSGPQLARLKHEFAENRYLTERRRQSLAAELGLAEAQIKIWFQNKRAKIKKAS.

It belongs to the engrailed homeobox family. As to expression, expressed in the middle silk gland but not in the posterior silk gland during the fourth molt/fifth intermolt period.

The protein resides in the nucleus. Functionally, this protein might be involved in the compartmentalization of the silk gland. The chain is Homeobox protein invected (INV) from Bombyx mori (Silk moth).